A 796-amino-acid chain; its full sequence is Probable phosphoketolase (796 aa).

Belongs to the XFP family. The cofactor is thiamine diphosphate.

The protein is Probable phosphoketolase of Synechococcus elongatus (strain ATCC 33912 / PCC 7942 / FACHB-805) (Anacystis nidulans R2).